The chain runs to 200 residues: Recombination protein RecR (200 aa).

The segment at C59–C74 adopts a C4-type zinc-finger fold. The Toprim domain occupies S82–P177.

Belongs to the RecR family.

May play a role in DNA repair. It seems to be involved in an RecBC-independent recombinational process of DNA repair. It may act with RecF and RecO. The chain is Recombination protein RecR from Bifidobacterium longum (strain DJO10A).